The following is a 312-amino-acid chain: MSIGKILLYYAFTPLSDPKAVQLWQRDLCESLNLRGRILISEHGINGTVGGDINDCKAYIRKTREYPGFAKMEFKWSEGGAEDFPKLSVKVRDEIVAFGAPNEIKVDENGIIGGGVHLKPEEVNQLVEERGDEVVFFDGRNAMEAQIGKFRDAVVPDVNTTHDFIKEIESGKYDDLKDKPVVTYCTGGIRCEILSSLMINRGFQEVYQIDGGIVRYGEKFGNQGLWEGSLYVFDKRMHMEFGEDYKRLGHCIHCDTPTNKFEHCVNEDECRQLVLMCPDCYANVETRHCGQDDCVEIAADLAARGVDPLVTQ.

A Rhodanese domain is found at 130–225; the sequence is RGDEVVFFDG…YGEKFGNQGL (96 aa). Cysteine 185 functions as the Cysteine persulfide intermediate in the catalytic mechanism.

Belongs to the TrhO family.

It carries out the reaction uridine(34) in tRNA + AH2 + O2 = 5-hydroxyuridine(34) in tRNA + A + H2O. Functionally, catalyzes oxygen-dependent 5-hydroxyuridine (ho5U) modification at position 34 in tRNAs. The chain is tRNA uridine(34) hydroxylase from Corynebacterium efficiens (strain DSM 44549 / YS-314 / AJ 12310 / JCM 11189 / NBRC 100395).